The primary structure comprises 436 residues: MCVVFSPRETVSELDRFIIGQSDAKRSVAIALRNRWRRQQLDGPMRDEVMPKNILMIGPTGVGKTGIARRLAKLAGAPFVKVEATKFTEVGYVGRDVEQIIRDLVEIAISLVREKKRDEVKVKAHINAEERVLDALVGKTASPATRESFRKKLRDGELDEKEIEIEVSDNNSNSTSTFDIPGMPGAQMGIMNLSEIFGKMGNRTKVRKTTVKDAFKPLIDDESEKLLDQDQIIQEALRVAENDGIVFIDEIDKIATRDGGASAAVSREGVQRDLLPLVEGTTIATKYGQIKTDHILFIASGAFHVSKPSDLLPELQGRLPIRVELNPLTREDLRRILTEPEASLIKQYIALMATEEVHLEITDDAIDALADIAVDLNARIENIGARRLQTVMERVLDEISFTAPDKAGTSFKVDAAYVKKSIGDLAADVDLSRFIL.

ATP is bound by residues Ile-19, 61-65 (GVGKT), Asp-249, Glu-314, and Arg-386.

The protein belongs to the ClpX chaperone family. HslU subfamily. In terms of assembly, a double ring-shaped homohexamer of HslV is capped on each side by a ring-shaped HslU homohexamer. The assembly of the HslU/HslV complex is dependent on binding of ATP.

The protein resides in the cytoplasm. In terms of biological role, ATPase subunit of a proteasome-like degradation complex; this subunit has chaperone activity. The binding of ATP and its subsequent hydrolysis by HslU are essential for unfolding of protein substrates subsequently hydrolyzed by HslV. HslU recognizes the N-terminal part of its protein substrates and unfolds these before they are guided to HslV for hydrolysis. The polypeptide is ATP-dependent protease ATPase subunit HslU (Bartonella henselae (strain ATCC 49882 / DSM 28221 / CCUG 30454 / Houston 1) (Rochalimaea henselae)).